Here is a 239-residue protein sequence, read N- to C-terminus: MEIFPAIDLKEGRCVRLYQGEFSKETVMNEDPVAQAIIFEKFGAKRLHIVDLDGAVAGESLNLSVIERICKAVRIPVQVGGGIRSLVAVEKLFSVGVDKVILGTAALYDKTFLEEAVLLYKEKIIVGIDAKNGFVATRGWLDVSEISYIDLAKQMEKIGVQTIVFTDISKDGTLGGPNVEQLELLQKSVAIRLIASGGVASIQDVKKLNDMNIYGVIIGKALYEKTIDLEEVLEVTKLC.

Residue aspartate 8 is the Proton acceptor of the active site. Catalysis depends on aspartate 129, which acts as the Proton donor.

This sequence belongs to the HisA/HisF family.

It localises to the cytoplasm. The enzyme catalyses 1-(5-phospho-beta-D-ribosyl)-5-[(5-phospho-beta-D-ribosylamino)methylideneamino]imidazole-4-carboxamide = 5-[(5-phospho-1-deoxy-D-ribulos-1-ylimino)methylamino]-1-(5-phospho-beta-D-ribosyl)imidazole-4-carboxamide. It functions in the pathway amino-acid biosynthesis; L-histidine biosynthesis; L-histidine from 5-phospho-alpha-D-ribose 1-diphosphate: step 4/9. The sequence is that of 1-(5-phosphoribosyl)-5-[(5-phosphoribosylamino)methylideneamino] imidazole-4-carboxamide isomerase from Bacillus cereus (strain AH820).